A 1525-amino-acid chain; its full sequence is Multidrug resistance-associated protein 1 (1525 aa).

Over 1-33 (MGIESLCSADASEPFWDWNLTWHTENPDFTQCF) the chain is Extracellular. The chain crosses the membrane as a helical span at residues 34 to 54 (QNTVLVWVPCIYLWVCFPAYF). The Cytoplasmic portion of the chain corresponds to 55 to 74 (LYLRSHDRGYIQMSILNKAK). Residues 75–95 (TALGLILWIVCWADLFYSFWE) traverse the membrane as a helical segment. The Extracellular segment spans residues 96-100 (RSQNI). Residues 101–121 (FRAPFFLISPTVLGITMLLAT) form a helical membrane-spanning segment. The Cytoplasmic segment spans residues 122–133 (FLIQHERLKGVQ). A helical membrane pass occupies residues 134 to 154 (SSGVMMIFWLISLLCATVIFR). The Extracellular portion of the chain corresponds to 155 to 172 (SKIMLALNTDTEVDAFRY). A helical membrane pass occupies residues 173-193 (VTFCTYFILLLVQLILSCFPE). Residues 194–315 (KPPLFSEAVN…RSSEASLSKV (122 aa)) are Cytoplasmic-facing. The chain crosses the membrane as a helical span at residues 316 to 336 (LYKTFGPYFLMSFLFKAAHDL). The ABC transmembrane type-1 1 domain maps to 324–607 (FLMSFLFKAA…LPMVISSIVE (284 aa)). Residues 337–362 (LMFTGPEILKLLINFVNNKSAPNWQG) lie on the Extracellular side of the membrane. A helical transmembrane segment spans residues 363–383 (YFYTGLLFVCACLQTLILHQY). Residues 384–439 (FHICFVTGMRLKTAIVGVIYRKALVITNSARKTSTVGEIVNLMSVDAQRFMDLATY) lie on the Cytoplasmic side of the membrane. A helical membrane pass occupies residues 440 to 460 (INMIWSAPLQVILALYLLWRN). Over 461 to 463 (LGP) the chain is Extracellular. The chain crosses the membrane as a helical span at residues 464–484 (SVLAGVAVMILLVPINAVMAM). At 485–546 (KTKTYQVAQM…VLKKSAYLAA (62 aa)) the chain is on the cytoplasmic side. The helical transmembrane segment at 547 to 567 (MGTFTWVCAPFLVALSTFAVY) threads the bilayer. Residues 568-589 (VKVNKNNILDAQKAFVSLALFN) are Extracellular-facing. A helical membrane pass occupies residues 590–610 (ILRFPLNILPMVISSIVEASV). Topologically, residues 611–961 (SLKRLRVFLS…VKATVYWEYM (351 aa)) are cytoplasmic. Residues 641-865 (IVVKNATFSW…DGAFAEFLRT (225 aa)) form the ABC transporter 1 domain. 675 to 682 (GQVGCGKS) is a binding site for ATP. Polar residues-rich tracts occupy residues 871–882 (QSMESSDASSPS) and 908–928 (SNSS…STAE). Disordered stretches follow at residues 871–891 (QSME…PVEN) and 908–930 (SNSS…AELQ). A helical membrane pass occupies residues 962–982 (KAIGLYISFLSVFLFMCNHIA). The region spanning 969–1250 (SFLSVFLFMC…LVRMTSDLET (282 aa)) is the ABC transmembrane type-1 2 domain. Residues 983–1019 (SLASNYWLSLWTDDPVVNGTQQYTNVRLGVYGALGIS) lie on the Extracellular side of the membrane. A helical membrane pass occupies residues 1020–1040 (QGIAVFGYSMAVSIGGIFASR). Over 1041-1083 (HLHLDLLHNVLRSPMSFFERTPSGNLVSRFSKEIDTIDSTIPP) the chain is Cytoplasmic. Residues 1084–1104 (IIKMFMGSTFNVIGACIIILL) traverse the membrane as a helical segment. A topological domain (extracellular) is located at residue Ala-1105. A helical membrane pass occupies residues 1106–1126 (TPIAAVVIPPLGLVYLLVQRF). Over 1127 to 1197 (YVATSRQLKR…VANRWLAVRL (71 aa)) the chain is Cytoplasmic. Residues 1198–1218 (EFVGNCIVLFAALFAVIARNK) form a helical membrane-spanning segment. The Extracellular segment spans residues 1219–1220 (LS). A helical membrane pass occupies residues 1221-1241 (PGLIGLSVSYSLQITAYLNWL). Residues 1242–1525 (VRMTSDLETN…YSMAKDSGLA (284 aa)) are Cytoplasmic-facing. An ABC transporter 2 domain is found at 1289–1521 (FRGFGLRYRE…KGLFYSMAKD (233 aa)). 1321 to 1328 (GRTGAGKS) is an ATP binding site.

This sequence belongs to the ABC transporter superfamily. ABCC family. Conjugate transporter (TC 3.A.1.208) subfamily.

The protein localises to the cell membrane. It carries out the reaction ATP + H2O + xenobioticSide 1 = ADP + phosphate + xenobioticSide 2.. The catalysed reaction is an S-substituted glutathione(in) + ATP + H2O = an S-substituted glutathione(out) + ADP + phosphate + H(+). The enzyme catalyses sphing-4-enine 1-phosphate(in) + ATP + H2O = sphing-4-enine 1-phosphate(out) + ADP + phosphate + H(+). It catalyses the reaction leukotriene C4(in) + ATP + H2O = leukotriene C4(out) + ADP + phosphate + H(+). It carries out the reaction 17beta-estradiol 17-O-(beta-D-glucuronate)(in) + ATP + H2O = 17beta-estradiol 17-O-(beta-D-glucuronate)(out) + ADP + phosphate + H(+). The catalysed reaction is 2',3'-cGAMP(in) + ATP + H2O = 2',3'-cGAMP(out) + ADP + phosphate + H(+). In terms of biological role, mediates export of organic anions and drugs from the cytoplasm. Mediates ATP-dependent transport of glutathione and glutathione conjugates, leukotriene C4, estradiol-17-beta-o-glucuronide and other xenobiotics. Hydrolyzes ATP with low efficiency. Mediates ATP-dependent, GSH-independent cyclic GMP-AMP (cGAMP) export. Thus, by limiting intracellular cGAMP concentrations negatively regulates the cGAS-STING pathway. This Gallus gallus (Chicken) protein is Multidrug resistance-associated protein 1.